The sequence spans 257 residues: Phycoerythrobilin:ferredoxin oxidoreductase (257 aa).

It belongs to the HY2 family.

It catalyses the reaction (3Z)-phycoerythrobilin + oxidized 2[4Fe-4S]-[ferredoxin] = 15,16-dihydrobiliverdin + reduced 2[4Fe-4S]-[ferredoxin] + 2 H(+). Catalyzes the two-electron reduction of the C2 and C3(1) diene system of 15,16-dihydrobiliverdin. This is Phycoerythrobilin:ferredoxin oxidoreductase from Synechococcus sp. (strain CC9902).